The following is a 299-amino-acid chain: Probable lipid kinase YegS (299 aa).

Residues 2–133 (ANFPASLLIL…IDMARVNDKT (132 aa)) enclose the DAGKc domain. ATP contacts are provided by residues Thr40, 66–72 (GDGTINE), and Thr95. Mg(2+) is bound by residues Leu215, Asp218, and Leu220. The Proton acceptor role is filled by Glu271.

This sequence belongs to the diacylglycerol/lipid kinase family. YegS lipid kinase subfamily. The cofactor is Mg(2+). It depends on Ca(2+) as a cofactor.

It localises to the cytoplasm. Probably phosphorylates lipids; the in vivo substrate is unknown. This Salmonella newport (strain SL254) protein is Probable lipid kinase YegS.